We begin with the raw amino-acid sequence, 161 residues long: ATP synthase subunit b' (161 aa).

The chain crosses the membrane as a helical span at residues 26-45; sequence LPLMAIQFLLLAFVLDKIFY.

This sequence belongs to the ATPase B chain family. F-type ATPases have 2 components, F(1) - the catalytic core - and F(0) - the membrane proton channel. F(1) has five subunits: alpha(3), beta(3), gamma(1), delta(1), epsilon(1). F(0) has four main subunits: a(1), b(1), b'(1) and c(10-14). The alpha and beta chains form an alternating ring which encloses part of the gamma chain. F(1) is attached to F(0) by a central stalk formed by the gamma and epsilon chains, while a peripheral stalk is formed by the delta, b and b' chains.

The protein resides in the cellular thylakoid membrane. Functionally, f(1)F(0) ATP synthase produces ATP from ADP in the presence of a proton or sodium gradient. F-type ATPases consist of two structural domains, F(1) containing the extramembraneous catalytic core and F(0) containing the membrane proton channel, linked together by a central stalk and a peripheral stalk. During catalysis, ATP synthesis in the catalytic domain of F(1) is coupled via a rotary mechanism of the central stalk subunits to proton translocation. Component of the F(0) channel, it forms part of the peripheral stalk, linking F(1) to F(0). The b'-subunit is a diverged and duplicated form of b found in plants and photosynthetic bacteria. This Trichodesmium erythraeum (strain IMS101) protein is ATP synthase subunit b'.